The sequence spans 903 residues: Envelope glycoprotein B (903 aa).

A signal peptide spans 1–29 (MRQGAARGCRWFVVWALLGLTLGVLVASA). The span at 30-51 (APSSPGTPGVAAATQAANGGPA) shows a compositional bias: low complexity. Residues 30–87 (APSSPGTPGVAAATQAANGGPATPAPPAPGPAPTGDTKPKKNKKPKNPPPPRPAGDNA) form a disordered region. Residues 30–773 (APSSPGTPGV…SGVSSFMSNP (744 aa)) are Virion surface-facing. Residues 52 to 61 (TPAPPAPGPA) are compositionally biased toward pro residues. 2 N-linked (GlcNAc...) asparagine; by host glycosylation sites follow: Asn-86 and Asn-140. 5 disulfide bridges follow: Cys-115-Cys-572, Cys-132-Cys-528, Cys-206-Cys-270, Cys-363-Cys-411, and Cys-595-Cys-632. 2 involved in fusion and/or binding to host membrane regions span residues 172–178 (VWFGHRY) and 257–264 (RVEAFHRY). Residues Asn-397 and Asn-429 are each glycosylated (N-linked (GlcNAc...) asparagine; by host). Positions 469–491 (REQSRKPPNPTPPPPGASANASV) are disordered. The segment covering 475–484 (PPNPTPPPPG) has biased composition (pro residues). N-linked (GlcNAc...) asparagine; by host glycosylation occurs at Asn-488. Asn-673 carries N-linked (GlcNAc...) asparagine; by host glycosylation. The interval 718 to 771 (IDTVIHADANAAMFAGLGAFFEGMGDLGRAVGKVVMGIVGGVVSAVSGVSSFMS) is hydrophobic membrane proximal region. Residues 774 to 794 (FGALAVGLLVLAGLAAAFFAF) form a helical membrane-spanning segment. At 795–903 (RYVMRLQSNP…KDGDADEDDL (109 aa)) the chain is on the intravirion side. The Golgi targeting motif lies at 848-851 (YMAL). Positions 882-903 (KRRNTNYTQVPNKDGDADEDDL) are disordered. The Internalization motif motif lies at 888 to 891 (YTQV).

This sequence belongs to the herpesviridae glycoprotein B family. As to quaternary structure, homotrimer; disulfide-linked. Interacts with host receptor MYH9/NMMHC-IIA. Interacts with host receptor MYH10/NMMHC-IIB. Interacts with the host coreceptor PILRA. Binds to heparan sulfate proteoglycans. Interacts with gH/gL heterodimer. Interacts with gD. In terms of processing, the cytoplasmic tail is phosphorylated by the viral kinase US3. Phosphorylation may be linked to a down-regulation of gB expression on cell surface. Ubiquitinated.

Its subcellular location is the virion membrane. It is found in the host cell membrane. It localises to the host endosome membrane. The protein resides in the host Golgi apparatus membrane. Functionally, envelope glycoprotein that forms spikes at the surface of virion envelope and binds to the host cell entry receptors MYH9/NMMHC-IIA and MYH10/NMMHC-IIB, promoting the virus entry into host cells. Essential for the initial attachment to heparan sulfate moieties of the host cell surface proteoglycans. Involved in fusion of viral and cellular membranes leading to virus entry into the host cell: following initial binding to its host cell entry receptors, membrane fusion is mediated by the fusion machinery composed at least of gB and the heterodimer gH/gL. May be involved in the fusion between the virion envelope and the outer nuclear membrane during virion egress. Also plays a role, together with gK, in virus-induced cell-to-cell fusion (syncytia formation). The polypeptide is Envelope glycoprotein B (Homo sapiens (Human)).